A 141-amino-acid polypeptide reads, in one-letter code: Nucleoside diphosphate kinase (141 aa).

The ATP site is built by Lys-11, Phe-59, Arg-87, Thr-93, Arg-104, and Asn-114. His-117 (pros-phosphohistidine intermediate) is an active-site residue.

Belongs to the NDK family. Homotetramer. Mg(2+) serves as cofactor.

The protein resides in the cytoplasm. The catalysed reaction is a 2'-deoxyribonucleoside 5'-diphosphate + ATP = a 2'-deoxyribonucleoside 5'-triphosphate + ADP. It catalyses the reaction a ribonucleoside 5'-diphosphate + ATP = a ribonucleoside 5'-triphosphate + ADP. Major role in the synthesis of nucleoside triphosphates other than ATP. The ATP gamma phosphate is transferred to the NDP beta phosphate via a ping-pong mechanism, using a phosphorylated active-site intermediate. The polypeptide is Nucleoside diphosphate kinase (Alkalilimnicola ehrlichii (strain ATCC BAA-1101 / DSM 17681 / MLHE-1)).